The sequence spans 335 residues: MSLDINHIALHQLIKRDEQNLELVLRDSLLEPTETVVEMVAELHRVYSAKNKAYGLFSEESELAQTLRLQRQGEEDFLAFSRAATGRLRDELAKYPFADGGFVLFCHYRYLAVEYLLVAVLSNLSSMRVNENLDINPTHYLDINHADIVARIDLTEWETNPESTRYLTFLKGRVGRKVADFFMDFLGASEGLNAKAQNRGLLQAVDDFTAEAQLDKAERQNVRQQVYSYCNEQLQAGEEIELESLSKELAGVSEVSFTEFAAEKGYELEESFPADRSTLRQLTKFAGSGGGLTINFDAMLLGERIFWDPATDTLTIKGTPPNLRDQLQRRTSGGN.

Belongs to the YejK family.

The protein localises to the cytoplasm. It is found in the nucleoid. This chain is Nucleoid-associated protein YejK, found in Shigella flexneri.